The primary structure comprises 147 residues: MVEWTATERTHIEAIWSKIDIDVCGPLALQRCLIVYPWTQRYFGSFGDLSTDAAIVGNPKVANHGVVALTGLRTALDHMDDIKATYATLSVLHSEKLHVDPDNFRLLCDCLTIVVAGKFGPTLRPEMQAAWQKYLSAVVSALGRQYH.

A Globin domain is found at 3 to 147 (EWTATERTHI…VVSALGRQYH (145 aa)). H64 and H93 together coordinate heme b.

It belongs to the globin family. Hb 1 is a heterotetramer of two alpha-1 and two beta-1 chains. Hb 2 is a heterotetramer of two alpha-2 and two beta-1 chains. In terms of tissue distribution, red blood cells.

Functionally, involved in oxygen transport from gills to the various peripheral tissues. The protein is Hemoglobin subunit beta-1 (hbb1) of Boreogadus saida (Polar cod).